A 476-amino-acid chain; its full sequence is Bifunctional protein HldE (476 aa).

Positions 1 to 318 (MAQYSAEFKQ…ENAIHARPET (318 aa)) are ribokinase. 195–198 (NMSE) is a binding site for ATP. D264 is a catalytic residue. Positions 344–476 (MTNGCFDILH…VIEKIKLLKD (133 aa)) are cytidylyltransferase.

In the N-terminal section; belongs to the carbohydrate kinase PfkB family. It in the C-terminal section; belongs to the cytidylyltransferase family. As to quaternary structure, homodimer.

It catalyses the reaction D-glycero-beta-D-manno-heptose 7-phosphate + ATP = D-glycero-beta-D-manno-heptose 1,7-bisphosphate + ADP + H(+). It carries out the reaction D-glycero-beta-D-manno-heptose 1-phosphate + ATP + H(+) = ADP-D-glycero-beta-D-manno-heptose + diphosphate. It functions in the pathway nucleotide-sugar biosynthesis; ADP-L-glycero-beta-D-manno-heptose biosynthesis; ADP-L-glycero-beta-D-manno-heptose from D-glycero-beta-D-manno-heptose 7-phosphate: step 1/4. The protein operates within nucleotide-sugar biosynthesis; ADP-L-glycero-beta-D-manno-heptose biosynthesis; ADP-L-glycero-beta-D-manno-heptose from D-glycero-beta-D-manno-heptose 7-phosphate: step 3/4. Its pathway is bacterial outer membrane biogenesis; LOS core biosynthesis. Catalyzes the phosphorylation of D-glycero-D-manno-heptose 7-phosphate at the C-1 position to selectively form D-glycero-beta-D-manno-heptose-1,7-bisphosphate. Its function is as follows. Catalyzes the ADP transfer from ATP to D-glycero-beta-D-manno-heptose 1-phosphate, yielding ADP-D-glycero-beta-D-manno-heptose. The sequence is that of Bifunctional protein HldE from Haemophilus influenzae (strain ATCC 51907 / DSM 11121 / KW20 / Rd).